A 619-amino-acid chain; its full sequence is Bifunctional glutathionylspermidine synthetase/amidase (619 aa).

The interval 2-195 (SKGTTSQDAP…LGWMIQTEDT (194 aa)) is gsp amidase. One can recognise a Peptidase C51 domain in the interval 34–176 (DPQEYEDDAV…MVVENGCYTL (143 aa)). A glutathionylspermidine-binding site is contributed by Q58. C59 serves as the catalytic S-(gamma-glutamyl-cysteinyl-glycyl)-cysteine intermediate. Cysteine sulfenic acid (-SOH); transient is present on C59. Residues R64, 78–81 (VGMA), and N149 each bind glutathionylspermidine. The segment at 196–205 (EYSLPQPEIA) is linker. The gsp synthetase stretch occupies residues 206–619 (GELLKISGAR…DIEPLIVVKK (414 aa)). Residue R316 coordinates glutathione. Residue 316-318 (RMD) participates in ATP binding. 3 residues coordinate Mg(2+): D318, E330, and N332. Glutathione is bound at residue S335. Position 391 (E391) interacts with spermidine. Positions 392 and 446 each coordinate glutathione. Residues K498, K533, 539–540 (CG), 568–571 (QQLW), Q582, and 603–605 (LVI) contribute to the ATP site. Residue D610 participates in spermidine binding.

It in the C-terminal section; belongs to the glutathionylspermidine synthase preATP-grasp family. In terms of assembly, homodimer. In terms of processing, oxidation of Cys-59 to sulfenic acid during oxidative stress selectively inhibits the amidase activity which leads to a rapid increase in the amounts of intracellular Gsp and Gsp S-thiolated proteins (GspSSPs).

It carries out the reaction spermidine + glutathione + ATP = glutathionylspermidine + ADP + phosphate + H(+). The catalysed reaction is glutathionylspermidine + H2O = spermidine + glutathione. It functions in the pathway sulfur metabolism; glutathione metabolism. It participates in amine and polyamine metabolism; spermidine metabolism. With respect to regulation, when exposed to oxidative stress, Gsp amidase activity is transiently inhibited in vivo by oxidation of the catalytic Cys-59 thiol to sulfenic acid; this modification does not affect Gsp synthetase activity. Gsp amidase activity is negatively autoregulated by the Gsp synthetase domain, and is activated by the Gsp synthetase substrates, GSH and ATP-Mg(2+); the occupancy of the synthetase active site may initiate communication through the protein as manifest by the release of inhibition of the amidase activity. A tetrahedral phosphonate analog of glutathionylspermidine, designed as a mimic of the proposed tetrahedral intermediate for either reaction, inhibits the synthetase activity (Ki of 10 uM) but does not inhibit the amidase activity. Amidase activity is inhibited by iodoacetamide in vitro. Functionally, catalyzes the formation of an amide bond between glutathione (GSH) and spermidine coupled with hydrolysis of ATP; also catalyzes the opposing reaction, i.e. the hydrolysis of glutathionylspermidine (Gsp) back to glutathione and spermidine. The amidase active site can also hydrolyze Gsp-disulfide (Gsp-S-S-Gsp) to Gsp-SG and Gsp S-thiolated proteins (GspSSPs) to GSH S-thiolated protein (GSSPs). Likely acts synergistically with glutaredoxin to regulate the redox environment of E.coli and defend against oxidative damage. In vitro, the amidase active site also catalyzes hydrolysis of amide and ester derivatives of glutathione (e.g. glutathione ethyl ester and glutathione amide) but lacks activity toward acetylspermidine (N1 and N8) and acetylspermine (N1). The sequence is that of Bifunctional glutathionylspermidine synthetase/amidase (gss) from Escherichia coli (strain K12).